We begin with the raw amino-acid sequence, 414 residues long: 2,3-bisphosphoglycerate-independent phosphoglycerate mutase (414 aa).

Belongs to the BPG-independent phosphoglycerate mutase family. A-PGAM subfamily.

It carries out the reaction (2R)-2-phosphoglycerate = (2R)-3-phosphoglycerate. It participates in carbohydrate degradation; glycolysis; pyruvate from D-glyceraldehyde 3-phosphate: step 3/5. Catalyzes the interconversion of 2-phosphoglycerate and 3-phosphoglycerate. This is 2,3-bisphosphoglycerate-independent phosphoglycerate mutase from Saccharolobus islandicus (strain M.14.25 / Kamchatka #1) (Sulfolobus islandicus).